A 460-amino-acid chain; its full sequence is Ribulose bisphosphate carboxylase large chain (460 aa).

Position 4 is an N6,N6,N6-trimethyllysine (K4). N113 and T163 together coordinate substrate. The Proton acceptor role is filled by K165. K167 provides a ligand contact to substrate. Residues K191, D193, and E194 each contribute to the Mg(2+) site. Residue K191 is modified to N6-carboxylysine. The Proton acceptor role is filled by H284. R285, H317, and S369 together coordinate substrate.

This sequence belongs to the RuBisCO large chain family. Type I subfamily. Heterohexadecamer of 8 large chains and 8 small chains. Mg(2+) is required as a cofactor.

The protein localises to the plastid. Its subcellular location is the chloroplast. It carries out the reaction 2 (2R)-3-phosphoglycerate + 2 H(+) = D-ribulose 1,5-bisphosphate + CO2 + H2O. It catalyses the reaction D-ribulose 1,5-bisphosphate + O2 = 2-phosphoglycolate + (2R)-3-phosphoglycerate + 2 H(+). Its function is as follows. RuBisCO catalyzes two reactions: the carboxylation of D-ribulose 1,5-bisphosphate, the primary event in carbon dioxide fixation, as well as the oxidative fragmentation of the pentose substrate in the photorespiration process. Both reactions occur simultaneously and in competition at the same active site. The sequence is that of Ribulose bisphosphate carboxylase large chain from Cunninghamia lanceolata (China fir).